Here is a 301-residue protein sequence, read N- to C-terminus: D-alanine--D-alanine ligase A (301 aa).

One can recognise an ATP-grasp domain in the interval 99 to 293 (KRILAFGNVR…FEELLDTIIE (195 aa)). 126–181 (IENLGYPVFVKPNNGGSSVATTLVESKEAVKDAVLEALKYDTEVMIEEYIKGDEIT) serves as a coordination point for ATP. Positions 248, 260, and 262 each coordinate Mg(2+).

The protein belongs to the D-alanine--D-alanine ligase family. Requires Mg(2+) as cofactor. Mn(2+) serves as cofactor.

It localises to the cytoplasm. The catalysed reaction is 2 D-alanine + ATP = D-alanyl-D-alanine + ADP + phosphate + H(+). It participates in cell wall biogenesis; peptidoglycan biosynthesis. In terms of biological role, cell wall formation. This is D-alanine--D-alanine ligase A from Clostridium perfringens (strain 13 / Type A).